Here is a 734-residue protein sequence, read N- to C-terminus: Subtilisin-like protease (734 aa).

A signal peptide spans 1 to 20; it reads MTCICIFSIAFLLSFHLTTA. The region spanning 28 to 109 is the Inhibitor I9 domain; sequence TYIVHVDKPD…AKLEKVLTLH (82 aa). Residues 114–591 form the Peptidase S8 domain; sequence PNFLGLYQNM…AGHVNPSKAS (478 aa). Residue Asp-141 is the Charge relay system of the active site. Asn-172 carries N-linked (GlcNAc...) asparagine glycosylation. His-199 acts as the Charge relay system in catalysis. N-linked (GlcNAc...) asparagine glycosylation is found at Asn-222 and Asn-306. Residues 357–442 form the PA domain; that stretch reads PLVYPGTSDE…THVGYAAGEM (86 aa). N-linked (GlcNAc...) asparagine glycosylation is found at Asn-448 and Asn-509. The active-site Charge relay system is Ser-524. Asn-652 carries N-linked (GlcNAc...) asparagine glycosylation.

This sequence belongs to the peptidase S8 family.

The protein resides in the secreted. The protein localises to the extracellular space. Its subcellular location is the apoplast. In terms of biological role, required for arbuscular mycorrhiza (AM) development during AM symbiosis with AM fungi (e.g. Glomeromycota intraradices). This Petunia hybrida (Petunia) protein is Subtilisin-like protease.